Consider the following 83-residue polypeptide: MPNIKSAIKRVRTTENAEARNISQKNAMRTAVKNAKTAINNNADNKAELVNFAIKSVDKASQSNLIHSNKADRIKSQLMSSSK.

Belongs to the bacterial ribosomal protein bS20 family.

Binds directly to 16S ribosomal RNA. The polypeptide is Small ribosomal subunit protein bS20 (Staphylococcus haemolyticus (strain JCSC1435)).